We begin with the raw amino-acid sequence, 413 residues long: Calmodulin-binding protein CmbB (413 aa).

FNIP repeat units follow at residues 104–148 (FNHP…LSDC), 149–192 (YNQA…LGKG), 222–257 (SLPP…FGDG), 258–301 (FNQP…FHQF), 304–343 (FSQT…FSEK), and 344–386 (YNHP…LNGY).

As to quaternary structure, interacts with calmodulin in the presence of Ca(2+).

This chain is Calmodulin-binding protein CmbB, found in Dictyostelium discoideum (Social amoeba).